The sequence spans 88 residues: UPF0147 protein Ta0600 (88 aa).

This sequence belongs to the UPF0147 family.

The protein is UPF0147 protein Ta0600 of Thermoplasma acidophilum (strain ATCC 25905 / DSM 1728 / JCM 9062 / NBRC 15155 / AMRC-C165).